The sequence spans 520 residues: Transcription factor MYB33 (520 aa).

Positions 1-24 are disordered; sequence MSYTSTDSDHNESPAADDNGSDCR. HTH myb-type domains lie at 29 to 81 and 82 to 136; these read GHAL…ANHL and RPNL…KRRQ. 2 DNA-binding regions (H-T-H motif) span residues 57–81 and 109–132; these read WNAVQKHTSLFRCGKSCRLRWANHL and WARMAAHLPGRTDNEIKNYWNTRI. Low complexity predominate over residues 331–342; sequence SSSPPHSDLLDP. 2 disordered regions span residues 331 to 359 and 426 to 447; these read SSSPPHSDLLDPFDTYIQSPPPPTGGEES and EMSTQNADETPPRQREKKRKPL.

In terms of tissue distribution, mostly expressed in stems, shoot apices, flowers and floral shoot tips, and, to a lower extent, in roots (e.g. root tips), seedlings, leaves and siliques.

The protein localises to the nucleus. In terms of biological role, transcriptional activator of alpha-amylase expression that binds to 5'-CAACTGTC-3' motif in target gene promoter. Positive regulator of abscisic acid (ABA) responses leading to growth arrest during seed germination. In vegetative tissues, inhibits growth by reducing cell proliferation. Promotes the expression of aleurone-related genes (e.g. CP1, CP, GASA1, BXL1 and BXL2) in seeds. Together with MYB65 and MYB101, promotes the programmed cell death (PCD) the vacuolation of protein storage vacuoles (PSVs) in the aleurone layers during seed germination. Binds to a GARE site (GA-response element) in the LEAFY promoter, essential for its gibberellic acid (GA)-mediated induction. Together with MYB65, facilitates anther and tapetum development. The chain is Transcription factor MYB33 from Arabidopsis thaliana (Mouse-ear cress).